Reading from the N-terminus, the 61-residue chain is Small ribosomal subunit protein uS14 (61 aa).

Residues C24, C27, C40, and C43 each coordinate Zn(2+).

The protein belongs to the universal ribosomal protein uS14 family. Zinc-binding uS14 subfamily. Part of the 30S ribosomal subunit. Contacts proteins S3 and S10. It depends on Zn(2+) as a cofactor.

Binds 16S rRNA, required for the assembly of 30S particles and may also be responsible for determining the conformation of the 16S rRNA at the A site. The polypeptide is Small ribosomal subunit protein uS14 (Dehalococcoides mccartyi (strain ATCC BAA-2266 / KCTC 15142 / 195) (Dehalococcoides ethenogenes (strain 195))).